A 317-amino-acid polypeptide reads, in one-letter code: MYKLLVALHLILCTVSHVKTRQRWTALTPEETLFIYTRCQEEHLPADNNSRKTYIENWHQWKLQPNDHVTQCYTKCVLEGLELYDGKQKKFRPGRVSSQHVAYQFLNGATADEVAKYKGAIDALEPASDSCEDLYMAYFPVHETFVNVTRKLYHGTVEGAARVYNSDPNLKRKNESLFTYCEKHVYGDQNREDMCRGRRYELTGSDELRNMIECVFRGLRYIKHGDINIDEIVRDFDHINRGDLEPRVRTILSDCRGIQPYDYYSCLINSDIREEFKLAFDYRDVRSADYAYIVKGNTYDAQKVIAEMNKVEKHVCG.

Residues Met1–Thr20 form the signal peptide. 5 disulfide bridges follow: Cys39–Cys76, Cys72–Cys131, Cys181–Cys214, Cys195–Cys316, and Cys255–Cys266. Thromboxane A2 contacts are provided by Trp58 and Tyr73. 5 residues coordinate serotonin: Glu182, Tyr264, Asp281, Asp284, and Met308.

It belongs to the PBP/GOBP family. As to expression, female salivary gland.

Its subcellular location is the secreted. Its function is as follows. Modulates blood feeding of female mosquitoes on vertebrate species by binding and sequestering different mediators involved in the host response, such as biogenic amines and eicosanoids. Binds serotonin with high affinity. Binds tryptamine, octopamine, dopamine and noradrenaline with low affinity. Binds leukotriene C4, leukotriene D4, leukotriene E4 and U-46619, a stable analog of thromboxane A2. Does not bind leukotriene B4, adrenaline, histamine and ADP. Inhibits platelet aggregation induced by low concentrations of collagen and arachidonic acid but not by ADP or adrenaline. The polypeptide is Long form salivary protein D7L2 (Anopheles darlingi (Mosquito)).